A 284-amino-acid chain; its full sequence is 2,3,4,5-tetrahydropyridine-2,6-dicarboxylate N-succinyltransferase (284 aa).

The substrate site is built by Arg111 and Asp148.

It belongs to the transferase hexapeptide repeat family. Homotrimer.

It localises to the cytoplasm. The enzyme catalyses (S)-2,3,4,5-tetrahydrodipicolinate + succinyl-CoA + H2O = (S)-2-succinylamino-6-oxoheptanedioate + CoA. It participates in amino-acid biosynthesis; L-lysine biosynthesis via DAP pathway; LL-2,6-diaminopimelate from (S)-tetrahydrodipicolinate (succinylase route): step 1/3. In Ehrlichia ruminantium (strain Gardel), this protein is 2,3,4,5-tetrahydropyridine-2,6-dicarboxylate N-succinyltransferase.